Here is a 230-residue protein sequence, read N- to C-terminus: 5'-methylthioadenosine/S-adenosylhomocysteine nucleosidase (230 aa).

The active-site Proton acceptor is the glutamate 12. Substrate-binding positions include glycine 78, methionine 153, and 174–175 (ME). The Proton donor role is filled by aspartate 198.

Belongs to the PNP/UDP phosphorylase family. MtnN subfamily.

It carries out the reaction S-adenosyl-L-homocysteine + H2O = S-(5-deoxy-D-ribos-5-yl)-L-homocysteine + adenine. The enzyme catalyses S-methyl-5'-thioadenosine + H2O = 5-(methylsulfanyl)-D-ribose + adenine. It catalyses the reaction 5'-deoxyadenosine + H2O = 5-deoxy-D-ribose + adenine. The protein operates within amino-acid biosynthesis; L-methionine biosynthesis via salvage pathway; S-methyl-5-thio-alpha-D-ribose 1-phosphate from S-methyl-5'-thioadenosine (hydrolase route): step 1/2. Its function is as follows. Catalyzes the irreversible cleavage of the glycosidic bond in both 5'-methylthioadenosine (MTA) and S-adenosylhomocysteine (SAH/AdoHcy) to adenine and the corresponding thioribose, 5'-methylthioribose and S-ribosylhomocysteine, respectively. Also cleaves 5'-deoxyadenosine, a toxic by-product of radical S-adenosylmethionine (SAM) enzymes, into 5-deoxyribose and adenine. This is 5'-methylthioadenosine/S-adenosylhomocysteine nucleosidase from Lysinibacillus sphaericus (strain C3-41).